Reading from the N-terminus, the 484-residue chain is Probable cytochrome P450 316a1 (484 aa).

Residue Cys433 coordinates heme.

Belongs to the cytochrome P450 family. It depends on heme as a cofactor.

The protein localises to the endoplasmic reticulum membrane. Its subcellular location is the microsome membrane. Functionally, may be involved in the metabolism of insect hormones and in the breakdown of synthetic insecticides. This chain is Probable cytochrome P450 316a1 (Cyp316a1), found in Drosophila melanogaster (Fruit fly).